We begin with the raw amino-acid sequence, 164 residues long: Large ribosomal subunit protein eL21x/eL21w (164 aa).

It belongs to the eukaryotic ribosomal protein eL21 family.

The chain is Large ribosomal subunit protein eL21x/eL21w (RPL21E) from Arabidopsis thaliana (Mouse-ear cress).